A 408-amino-acid chain; its full sequence is Aspartate aminotransferase (408 aa).

3 residues coordinate L-aspartate: Gly-45, Trp-134, and Asn-184. An N6-(pyridoxal phosphate)lysine modification is found at Lys-247. Arg-382 is an L-aspartate binding site.

Belongs to the class-I pyridoxal-phosphate-dependent aminotransferase family. As to quaternary structure, homodimer. Pyridoxal 5'-phosphate serves as cofactor.

The protein resides in the cytoplasm. It carries out the reaction L-aspartate + 2-oxoglutarate = oxaloacetate + L-glutamate. Its function is as follows. Catalyzes the reversible conversion of aspartate and 2-oxoglutarate to glutamate and oxaloacetate. Does not have prephenate aminotransferase activity. The protein is Aspartate aminotransferase of Streptomyces avermitilis (strain ATCC 31267 / DSM 46492 / JCM 5070 / NBRC 14893 / NCIMB 12804 / NRRL 8165 / MA-4680).